The following is a 459-amino-acid chain: Chaperone SurA (459 aa).

An N-terminal signal peptide occupies residues Met1 to Ala23. PpiC domains follow at residues Val197 to Glu301 and Val312 to Glu411.

Its subcellular location is the periplasm. It carries out the reaction [protein]-peptidylproline (omega=180) = [protein]-peptidylproline (omega=0). Chaperone involved in the correct folding and assembly of outer membrane proteins. Recognizes specific patterns of aromatic residues and the orientation of their side chains, which are found more frequently in integral outer membrane proteins. May act in both early periplasmic and late outer membrane-associated steps of protein maturation. The sequence is that of Chaperone SurA from Albidiferax ferrireducens (strain ATCC BAA-621 / DSM 15236 / T118) (Rhodoferax ferrireducens).